A 703-amino-acid polypeptide reads, in one-letter code: Phenylalanine aminomutase (L-beta-phenylalanine forming) (703 aa).

Tyr-79 serves as the catalytic Proton donor/acceptor. A cross-link (5-imidazolinone (Ala-Gly)) is located at residues 177–179 (ASG). Ser-178 is modified (2,3-didehydroalanine (Ser)).

The protein belongs to the PAL/histidase family. Post-translationally, contains an active site 4-methylidene-imidazol-5-one (MIO), which is formed autocatalytically by cyclization and dehydration of residues Ala-Ser-Gly.

The catalysed reaction is L-phenylalanine = L-beta-phenylalanine. It functions in the pathway mycotoxin biosynthesis. Functionally, phenylalanine aminomutase; part of the gene cluster that mediates the biosynthesis of the mycotoxin cyclochlorotine, a hepatotoxic and carcinogenic cyclic chlorinated pentapeptide. Within the pathway, cctP1 provides the uncommon building block beta-Phe from Phe. The NRPS cctN initially catalyzes the condensation of L-serine (Ser), Pro, L-2-aminobutyrate (2Abu), Ser, and beta-Phe in this order to produce isocyclotine. After the dichlorination of Pro2 catalyzed by cctP2 to produce isocyclochlorotine, the cctO-mediated transacylation of isocyclochlorotine can furnish cyclochlorotine. The subsequent hydroxylation of cyclochlorotine by cctR yields hydroxycyclochlorotine as the final product. CctP1 probably acts as a phenylalanine aminomutase and provides the uncommon building block beta-Phe. Furthermore, 2Abu can be synthesized from threonine by one of the threonine dehydratases and transaminases localized outside of the cluster. The functions of the remaining proteins encoded by the cluster, cctM and cctT, have not been identified yet. The chain is Phenylalanine aminomutase (L-beta-phenylalanine forming) from Talaromyces islandicus (Penicillium islandicum).